A 466-amino-acid chain; its full sequence is MVSQALRLLCLLLGLQGCLAAGGVAEASGGETRDXXWKPGPHRVFITQEEAHGVLHRRRRANAFLEELRPGSLERECKEEQCSFEEAREIFKDLERTKLFWISYSDGDQCASSPCQNGGSCKDQLQSYICFCLPAFEGRNCETYKDDQLICVNENGGCEQYCSDHTGTKRSCRCHEGYSLLADGVSCTPTVEYPCGKIPILEKRNASKPQGRIVGGKVCPKGECPWQVLLLVNGAQLCGGTLINTIWVVSAAHCFDKIKNWRNLIAVLGEHDLSEHDGDEQSRRVAQVIIPSTYIPGTTNHDIALLRLHQPVVLTDHVVPLCLPERAFSERTLAFVRFSLVSGWGQLLDRGATALELMVLNVPRLMTQDCLQQSRKVGDSPNITEYMFCAGYSDGSKDSCKGDSGGPHATHYRGTWYLTGIVSWGQGCASVGHFGVYTRVSQYIEWLQKLMRSEPRPGVLLRAPFP.

A signal peptide spans 1-20; the sequence is MVSQALRLLCLLLGLQGCLA. A propeptide spanning residues 21 to 60 is cleaved from the precursor; the sequence is AGGVAEASGGETRDXXWKPGPHRVFITQEEAHGVLHRRRR. The Gla domain occupies 61–105; that stretch reads ANAFLEELRPGSLERECKEEQCSFEEAREIFKDLERTKLFWISYS. E66, E67, E74, E76, E79, E80, E85, E86, E89, and E95 each carry 4-carboxyglutamate. C77 and C82 are oxidised to a cystine. In terms of domain architecture, EGF-like 1; calcium-binding spans 106–142; sequence DGDQCASSPCQNGGSCKDQLQSYICFCLPAFEGRNCE. 10 cysteine pairs are disulfide-bonded: C110/C121, C115/C130, C132/C141, C151/C162, C158/C172, C174/C187, C195/C322, C219/C224, C238/C254, and C370/C389. A glycan (O-linked (Glc...) serine; alternate) is linked at S112. S112 carries O-linked (Xyl...) serine; alternate glycosylation. An O-linked (Fuc) serine glycan is attached at S120. A (3R)-3-hydroxyaspartate modification is found at D123. The EGF-like 2 domain maps to 147 to 188; the sequence is DQLICVNENGGCEQYCSDHTGTKRSCRCHEGYSLLADGVSCT. N-linked (GlcNAc...) asparagine glycosylation is present at N205. Positions 213–452 constitute a Peptidase S1 domain; sequence IVGGKVCPKG…YIEWLQKLMR (240 aa). Active-site charge relay system residues include H253 and D302. N382 carries N-linked (GlcNAc...) asparagine glycosylation. D398 is a binding site for substrate. C400 and C428 form a disulfide bridge. S404 (charge relay system) is an active-site residue.

The protein belongs to the peptidase S1 family. As to quaternary structure, heterodimer of a light chain and a heavy chain linked by a disulfide bond. Post-translationally, the vitamin K-dependent, enzymatic carboxylation of some glutamate residues allows the modified protein to bind calcium. In terms of processing, the iron and 2-oxoglutarate dependent 3-hydroxylation of aspartate and asparagine is (R) stereospecific within EGF domains. O-glycosylated. O-fucosylated by POFUT1 on a conserved serine or threonine residue found in the consensus sequence C2-X(4,5)-[S/T]-C3 of EGF domains, where C2 and C3 are the second and third conserved cysteines. Post-translationally, can be either O-glucosylated or O-xylosylated at Ser-112 by POGLUT1.

The protein localises to the secreted. The enzyme catalyses Selective cleavage of Arg-|-Ile bond in factor X to form factor Xa.. Initiates the extrinsic pathway of blood coagulation. Serine protease that circulates in the blood in a zymogen form. Factor VII is converted to factor VIIa by factor Xa, factor XIIa, factor IXa, or thrombin by minor proteolysis. In the presence of tissue factor and calcium ions, factor VIIa then converts factor X to factor Xa by limited proteolysis. Factor VIIa also converts factor IX to factor IXa in the presence of tissue factor and calcium. This is Coagulation factor VII (F7) from Pan troglodytes (Chimpanzee).